Here is a 275-residue protein sequence, read N- to C-terminus: MALLKSKPTSPGKRGEIRVVHHDIYKGKPHAALVEKLKKTGGRNNQGRITVRHIGGGQRQKYRIIDFKRNKDGILGRVERLEYDPNRTALIALISYKDGEKRYIIAPSNLEVGATIQSGADSPISVGNCLPLKNIPVGTTIHCVEMKPGKGAQMLRSAGCSGQLVAKEGVYATLRLRSGEMRKIHVLCRAVIGEVSNSEHNLRALGKAGAKRWRGIRPTVRGVAMNPVDHPHGGGEGRTSGGRHPVSPWGLPTKGYKTRSNKRTDTFIVRGRKKK.

The interval 223-260 (VAMNPVDHPHGGGEGRTSGGRHPVSPWGLPTKGYKTRS) is disordered.

Belongs to the universal ribosomal protein uL2 family. As to quaternary structure, part of the 50S ribosomal subunit. Forms a bridge to the 30S subunit in the 70S ribosome.

One of the primary rRNA binding proteins. Required for association of the 30S and 50S subunits to form the 70S ribosome, for tRNA binding and peptide bond formation. It has been suggested to have peptidyltransferase activity; this is somewhat controversial. Makes several contacts with the 16S rRNA in the 70S ribosome. This is Large ribosomal subunit protein uL2 from Legionella pneumophila (strain Paris).